Here is a 398-residue protein sequence, read N- to C-terminus: MSFMNFEPKPLADTDIFKPIKIGNTELKHRVVMPALTRMRALHPGNVPNPDWAVEYYRQRSQYPGTMIITEGAFPSAQSGGYDNAPGVWSEEQLAQWRKIFKAIHDNKSFVWVQLWVLGRQAFADNLARDGLRYDSASDEVYMGEDEKERAIRSNNPQHGITKDEIKQYIRDYVDAAKKCIDAGADGVEIHSANGYLLNQFLDPISNKRTDEYGGSIENRARFVLEVVDAVVDAVGAERTSIRFSPYGVFGTMSGGSDPVLVAQFAYVLAELEKRAKAGKRLAYVDLVEPRVTSPFQPEFEGWYKGGTNEFVYSVWKGNVLRVGNYALDPDAAITDSKNPNTLIGYGRAFIANPDLVERLEKGLPLNQYDRPSFYKMSAEGYIDYPTYEEAVAKGYKK.

Positions 37 and 191 each coordinate FMN. The substrate site is built by H191 and N194. The Proton donor role is filled by Y196. FMN contacts are provided by R243 and R348. Y375 contributes to the substrate binding site.

The protein belongs to the NADH:flavin oxidoreductase/NADH oxidase family. Homodimer or heterodimer. FMN serves as cofactor.

It catalyses the reaction butanoate + NAD(+) = (2E)-2-butenoate + NADH + H(+). Functionally, enoate reductase with broad substrate specificity for different alpha,beta-unsaturated carbonyl compounds. Prefers NADPH over NADH as cofactor. The polypeptide is Enoate reductase 1 (KYE1) (Kluyveromyces lactis (strain ATCC 8585 / CBS 2359 / DSM 70799 / NBRC 1267 / NRRL Y-1140 / WM37) (Yeast)).